A 98-amino-acid chain; its full sequence is Large ribosomal subunit protein bL28 (98 aa).

This sequence belongs to the bacterial ribosomal protein bL28 family.

The chain is Large ribosomal subunit protein bL28 from Beijerinckia indica subsp. indica (strain ATCC 9039 / DSM 1715 / NCIMB 8712).